A 331-amino-acid polypeptide reads, in one-letter code: uncharacterized protein (331 aa).

Pentapeptide repeat domains are found at residues 20 to 59 (LKLP…NLGQ), 60 to 99 (ANLV…ILRD), 100 to 139 (SDMT…NMRQ), 151 to 190 (AILG…DLRK), 191 to 230 (ADLS…KISE), 231 to 270 (AEMT…DLSR), and 271 to 310 (ANLT…DLMS).

This is an uncharacterized protein from Synechocystis sp. (strain ATCC 27184 / PCC 6803 / Kazusa).